The primary structure comprises 863 residues: Leucine--tRNA ligase (863 aa).

A 'HIGH' region motif is present at residues 41 to 51 (PYPSGRIHIGH). The 'KMSKS' region signature appears at 627–631 (KMSKS). Residue Lys630 coordinates ATP.

The protein belongs to the class-I aminoacyl-tRNA synthetase family.

The protein localises to the cytoplasm. The catalysed reaction is tRNA(Leu) + L-leucine + ATP = L-leucyl-tRNA(Leu) + AMP + diphosphate. The chain is Leucine--tRNA ligase from Jannaschia sp. (strain CCS1).